The following is a 155-amino-acid chain: Ribosomal RNA large subunit methyltransferase H (155 aa).

Residues Leu-72, Gly-103, and 122-127 (LSPLTL) contribute to the S-adenosyl-L-methionine site.

The protein belongs to the RNA methyltransferase RlmH family. In terms of assembly, homodimer.

The protein resides in the cytoplasm. It catalyses the reaction pseudouridine(1915) in 23S rRNA + S-adenosyl-L-methionine = N(3)-methylpseudouridine(1915) in 23S rRNA + S-adenosyl-L-homocysteine + H(+). Its function is as follows. Specifically methylates the pseudouridine at position 1915 (m3Psi1915) in 23S rRNA. In Mannheimia succiniciproducens (strain KCTC 0769BP / MBEL55E), this protein is Ribosomal RNA large subunit methyltransferase H.